Consider the following 51-residue polypeptide: Mitochondrial import receptor subunit TOM5 homolog (51 aa).

At Met-1 the chain carries N-acetylmethionine. Residue Lys-10 forms a Glycyl lysine isopeptide (Lys-Gly) (interchain with G-Cter in SUMO2) linkage. A helical membrane pass occupies residues 27-45; sequence SIRNFLIYVALLRVTPFIL.

Belongs to the Tom5 family. In terms of assembly, forms part of the preprotein translocase complex of the outer mitochondrial membrane (TOM complex) which consists of at least 7 different proteins (TOMM5, TOMM6, TOMM7, TOMM20, TOMM22, TOMM40 and TOMM70).

It localises to the mitochondrion outer membrane. This Bos taurus (Bovine) protein is Mitochondrial import receptor subunit TOM5 homolog.